Reading from the N-terminus, the 244-residue chain is Venom nerve growth factor 3 (244 aa).

The first 18 residues, 1 to 18 (MSMLCYTLIIAFLIGIWA), serve as a signal peptide directing secretion. The propeptide occupies 19-125 (APKSEDNVPL…TLNRNIRAKR (107 aa)). Residues 47–66 (GLKTSRNTDQRHPAPKKAED) are compositionally biased toward basic and acidic residues. The disordered stretch occupies residues 47–67 (GLKTSRNTDQRHPAPKKAEDQ). 3 disulfide bridges follow: C139–C205, C181–C233, and C193–C235.

This sequence belongs to the NGF-beta family. In terms of assembly, homodimer; non-covalently linked. In terms of tissue distribution, expressed by the venom gland.

The protein resides in the secreted. Functionally, nerve growth factor is important for the development and maintenance of the sympathetic and sensory nervous systems. It stimulates division and differentiation of sympathetic and embryonic sensory neurons as well as basal forebrain cholinergic neurons in the brain. Its relevance in the snake venom is not clear. However, it has been shown to inhibit metalloproteinase-dependent proteolysis of platelet glycoprotein Ib alpha, suggesting a metalloproteinase inhibition to prevent metalloprotease autodigestion and/or protection against prey proteases. Binds a lipid between the two protein chains in the homodimer. The lipid-bound form promotes histamine relase from mouse mast cells, contrary to the lipid-free form. This chain is Venom nerve growth factor 3, found in Notechis scutatus scutatus (Mainland tiger snake).